A 254-amino-acid chain; its full sequence is Serotonin N-acetyltransferase 1, chloroplastic (254 aa).

The transit peptide at 1 to 83 (MASAASASAS…NSTETVEPPS (83 aa)) directs the protein to the chloroplast. In terms of domain architecture, N-acetyltransferase spans 119–254 (VNVYDLQALC…IKGMFWYPRF (136 aa)).

Its subcellular location is the plastid. The protein localises to the chloroplast. It is found in the nucleus. The catalysed reaction is a 2-arylethylamine + acetyl-CoA = an N-acetyl-2-arylethylamine + CoA + H(+). It participates in aromatic compound metabolism; melatonin biosynthesis; melatonin from serotonin: step 1/2. In terms of biological role, catalyzes the N-acetylation of serotonin into N-acetylserotonin, the penultimate step in the synthesis of melatonin. Catalyzes in vitro the N-acetylation of tryptamine to produce N-acetyltryptamine, 5-methoxytryptamine to produce melatonin and tyramine to produce N-acetyltyramine. Acetyltransferase required for geminivirus infection and systemic spread. This Oryza sativa subsp. indica (Rice) protein is Serotonin N-acetyltransferase 1, chloroplastic.